Reading from the N-terminus, the 62-residue chain is Alpha-elapitoxin-Nn2a (62 aa).

The segment at 1–20 is disordered; the sequence is LECHNQQSSQTPTTTDCSGG. Cystine bridges form between cysteine 3/cysteine 24, cysteine 17/cysteine 41, cysteine 43/cysteine 54, and cysteine 55/cysteine 60.

It belongs to the three-finger toxin family. Short-chain subfamily. Type I alpha-neurotoxin sub-subfamily. Expressed by the venom gland.

Its subcellular location is the secreted. In terms of biological role, nicotinic acetylcholine receptor antagonist. Binds to muscle nicotinic acetylcholine receptor (nAChR) and inhibits acetylcholine from binding to the receptor, thereby impairing neuromuscular transmission. Produces peripheral paralysis by blocking neuromuscular transmission at the postsynaptic site. Induces concentration-dependent inhibition of indirect twitches and abolishes contractile responses of tissues to exogenous acetylcholine and carbachol, in the chick biventer cervicis nerve-muscle preparation at 100-300 nM (in vitro). Prior incubation of tissues with Indian polyvalent antivenom (1 ml/0.6 mg) prevents the neurotoxic effects at 100 nM (in vitro). Addition of Indian polyvalent antivenom (1 ml/0.6 mg) at the t90 time point does not reverse the neurotoxic effects (in vitro). Displays non-competitive antagonism of concentration-response curves to carbachol, with a pA2 of 8.01 (in vitro). This Naja naja (Indian cobra) protein is Alpha-elapitoxin-Nn2a.